A 160-amino-acid polypeptide reads, in one-letter code: Eosinophil cationic protein (160 aa).

Residues Met-1–Ala-27 form the signal peptide. The interval Arg-28 to Arg-72 is required for nearly all of the bactericidal activities; partially involved in LPS-binding. The active-site Proton acceptor is the His-42. 4 disulfides stabilise this stretch: Cys-50/Cys-110, Cys-64/Cys-123, Cys-82/Cys-138, and Cys-89/Cys-98. Residue Tyr-60 is modified to 3'-nitrotyrosine. A substrate-binding site is contributed by Lys-65 to Thr-69. 2 N-linked (GlcNAc...) asparagine glycosylation sites follow: Asn-92 and Asn-119. His-155 (proton donor) is an active-site residue.

The protein belongs to the pancreatic ribonuclease family. In terms of assembly, interacts with bacterial lipopolysaccharide (LPS) and lipoteichoic acid (LTA). In vitro interacts with phospholipid bilayers.

The protein resides in the secreted. Its function is as follows. Cytotoxin and helminthotoxin with low-efficiency ribonuclease activity. Possesses a wide variety of biological activities. Exhibits antibacterial activity. The sequence is that of Eosinophil cationic protein (RNASE3) from Macaca fascicularis (Crab-eating macaque).